The sequence spans 145 residues: Glutaconyl-CoA decarboxylase subunit gamma (145 aa).

The disordered stretch occupies residues 52 to 82 (APAPAAAPAAAPAPAAKPAAAAPAGSVTVSA). A compositionally biased stretch (low complexity) spans 57–75 (AAPAAAPAPAAKPAAAAPA). The region spanning 77-145 (SVTVSAPMPG…VATGDVMVIL (69 aa)) is the Biotinyl-binding domain. An N6-biotinyllysine modification is found at Lys-112.

In terms of assembly, heterooctamer consisting of two alpha, two beta, two gamma and two delta subunits. It depends on biotin as a cofactor.

The enzyme catalyses (2E)-glutaconyl-CoA + Na(+)(in) + H(+) = (2E)-butenoyl-CoA + Na(+)(out) + CO2. Its pathway is amino-acid degradation; L-glutamate degradation via hydroxyglutarate pathway; crotonoyl-CoA from L-glutamate: step 5/5. Its function is as follows. Biotin carrier subunit of the primary sodium pump glutaconyl-CoA decarboxylase (GCD). This chain is Glutaconyl-CoA decarboxylase subunit gamma (gcdC), found in Acidaminococcus fermentans (strain ATCC 25085 / DSM 20731 / CCUG 9996 / CIP 106432 / VR4).